A 425-amino-acid chain; its full sequence is Serine--tRNA ligase (425 aa).

Position 233–235 (233–235) interacts with L-serine; it reads TAE. 264-266 is a binding site for ATP; that stretch reads RRE. Residue Glu-287 coordinates L-serine. ATP is bound at residue 351–354; it reads EISS. Residue Ser-385 coordinates L-serine.

It belongs to the class-II aminoacyl-tRNA synthetase family. Type-1 seryl-tRNA synthetase subfamily. As to quaternary structure, homodimer. The tRNA molecule binds across the dimer.

It localises to the cytoplasm. It catalyses the reaction tRNA(Ser) + L-serine + ATP = L-seryl-tRNA(Ser) + AMP + diphosphate + H(+). It carries out the reaction tRNA(Sec) + L-serine + ATP = L-seryl-tRNA(Sec) + AMP + diphosphate + H(+). The protein operates within aminoacyl-tRNA biosynthesis; selenocysteinyl-tRNA(Sec) biosynthesis; L-seryl-tRNA(Sec) from L-serine and tRNA(Sec): step 1/1. Catalyzes the attachment of serine to tRNA(Ser). Is also able to aminoacylate tRNA(Sec) with serine, to form the misacylated tRNA L-seryl-tRNA(Sec), which will be further converted into selenocysteinyl-tRNA(Sec). In Prochlorococcus marinus (strain MIT 9215), this protein is Serine--tRNA ligase.